We begin with the raw amino-acid sequence, 422 residues long: L-threonine dehydratase biosynthetic IlvA (422 aa).

Lys-60 is modified (N6-(pyridoxal phosphate)lysine). Pyridoxal 5'-phosphate-binding positions include Asn-87, 190–194 (GGGGL), and Ser-315. In terms of domain architecture, ACT-like spans 339 to 413 (HYFIVNFPQR…KPFHYVEVNK (75 aa)).

This sequence belongs to the serine/threonine dehydratase family. Homotetramer. The cofactor is pyridoxal 5'-phosphate.

It catalyses the reaction L-threonine = 2-oxobutanoate + NH4(+). It functions in the pathway amino-acid biosynthesis; L-isoleucine biosynthesis; 2-oxobutanoate from L-threonine: step 1/1. Its function is as follows. Catalyzes the anaerobic formation of alpha-ketobutyrate and ammonia from threonine in a two-step reaction. The first step involved a dehydration of threonine and a production of enamine intermediates (aminocrotonate), which tautomerizes to its imine form (iminobutyrate). Both intermediates are unstable and short-lived. The second step is the nonenzymatic hydrolysis of the enamine/imine intermediates to form 2-ketobutyrate and free ammonia. In the low water environment of the cell, the second step is accelerated by RidA. The protein is L-threonine dehydratase biosynthetic IlvA (ilvA) of Bacillus subtilis (strain 168).